Reading from the N-terminus, the 172-residue chain is Inorganic pyrophosphatase (172 aa).

Substrate-binding residues include lysine 28, arginine 42, and tyrosine 54. Residues aspartate 64, aspartate 69, and aspartate 101 each coordinate Mg(2+). Tyrosine 140 contacts substrate.

Belongs to the PPase family. Homohexamer. Mg(2+) serves as cofactor.

It localises to the cytoplasm. It carries out the reaction diphosphate + H2O = 2 phosphate + H(+). Its function is as follows. Catalyzes the hydrolysis of inorganic pyrophosphate (PPi) forming two phosphate ions. The protein is Inorganic pyrophosphatase of Campylobacter jejuni subsp. jejuni serotype O:2 (strain ATCC 700819 / NCTC 11168).